A 122-amino-acid chain; its full sequence is Large ribosomal subunit protein uL18 (122 aa).

It belongs to the universal ribosomal protein uL18 family. As to quaternary structure, part of the 50S ribosomal subunit; part of the 5S rRNA/L5/L18/L25 subcomplex. Contacts the 5S and 23S rRNAs.

Its function is as follows. This is one of the proteins that bind and probably mediate the attachment of the 5S RNA into the large ribosomal subunit, where it forms part of the central protuberance. This is Large ribosomal subunit protein uL18 from Lachnoclostridium phytofermentans (strain ATCC 700394 / DSM 18823 / ISDg) (Clostridium phytofermentans).